A 471-amino-acid polypeptide reads, in one-letter code: BRISC complex subunit FAM175B (471 aa).

One can recognise an MPN domain in the interval 7-161; that stretch reads LVTISGAALS…THKFRHVFLR (155 aa). A coiled-coil region spans residues 245–272; that stretch reads ESDLEVAELEKQVHELKIKIATQQLAKR. The interval 343–445 is disordered; that stretch reads AEKSRRAGRS…FSDAECPISS (103 aa). Low complexity predominate over residues 359–370; that stretch reads NQQQETQNFFTN.

It belongs to the FAM175 family. Abro1 subfamily. As to quaternary structure, component of the BRISC complex, at least composed of FAM175B/ABRO1, BRCC3/BRCC36, BABAM2 and BABAM1/NBA1. Within the complex, interacts directly with BRCC3/BRCC36. The heterodimer with BRCC3/BRCC36 assembles into a heterotetramer. The BRISC complex binds polyubiquitin.

It is found in the cytoplasm. It localises to the nucleus. The protein localises to the cytoskeleton. Its subcellular location is the spindle pole. Component of the BRISC complex that specifically cleaves 'Lys-63'-linked polyubiquitin, leaving the last ubiquitin chain attached to its substrates. Does not have activity by itself, but the catalytic subunit BRCC3/BRCC36 needs to be associated into a heterotetramer with FAM175B for minimal in vitro activity. May act as a central scaffold protein that assembles the various components of the BRISC complex and retains them in the cytoplasm. Plays a role in regulating the onset of apoptosis via its role in modulating 'Lys-63'-linked ubiquitination of target proteins. Required for normal mitotic spindle assembly and microtubule attachment to kinetochores via its role in deubiquitinating numa1. This chain is BRISC complex subunit FAM175B, found in Camponotus floridanus (Florida carpenter ant).